The sequence spans 213 residues: KHG/KDPG aldolase (213 aa).

Glu-45 functions as the Proton acceptor in the catalytic mechanism. The pyruvate site is built by Arg-49, Thr-73, and Lys-133. Lys-133 (schiff-base intermediate with substrate) is an active-site residue.

This sequence belongs to the KHG/KDPG aldolase family. Homotrimer.

It is found in the cytoplasm. The enzyme catalyses 2-dehydro-3-deoxy-6-phospho-D-gluconate = D-glyceraldehyde 3-phosphate + pyruvate. The catalysed reaction is (4S)-4-hydroxy-2-oxoglutarate = glyoxylate + pyruvate. The protein operates within carbohydrate acid metabolism; 2-dehydro-3-deoxy-D-gluconate degradation; D-glyceraldehyde 3-phosphate and pyruvate from 2-dehydro-3-deoxy-D-gluconate: step 2/2. It functions in the pathway carbohydrate metabolism; glyoxylate and dicarboxylate metabolism. Its function is as follows. Involved in the degradation of glucose via the Entner-Doudoroff pathway. Catalyzes the reversible, stereospecific retro-aldol cleavage of 2-keto-3-deoxy-6-phosphogluconate (KDPG) to pyruvate and D-glyceraldehyde-3-phosphate. In addition to its KDPG aldolase activity, catalyzes the reversible cleavage of 2-keto-4-hydroxyglutarate (KHG) to glyoxylate and pyruvate. The enzyme is stereoselective for the S-enantiomer of KHG. Cleavage of KHG could serve in tricarboxylic acid (TCA) cycle regulation or, when operating in the reverse direction, in the detoxification of glyoxylate. This chain is KHG/KDPG aldolase (eda), found in Escherichia coli O157:H7.